Consider the following 449-residue polypeptide: MKLTQRLSLRVRLTLIFLILVSITWAISSFVAWRKTTDNVDELFDTQLMLFARRLSTLDLNELNAPQRMAHTPKKLKHGHIDDDALAFAIFSADGKMLLHDGDNGQDIPYRYRREGFDNGYLKDDNDLWRFLWLNSADGKYRIVVGQEWDYREDMALAIVAAQLTPWLIALPFMLLILLLLLHRELRPLKKLAQALRFRSPESETPLDAKGVPSEVRPLVEALNQLFSRIHSMMVRERRFTSDAAHELRSPLAALKVQTEVAQLSGDDPLSRDKALTQLHAGIDRATRLVDQLLTLSRLDSLNNLQDVAEISLEELLQSAVMDIYHPAQQANIDVRLQLNAHDVIRTGQPLLLSLLVRNLLDNAIRYSPQGSVVDVTLHARSFTVRDNGPGVAPEILTHIGERFYRPPGQSVTGSGLGLSIVRRIATLHGMTVSFGNAAEGGFEAVVRW.

Residues 1 to 12 (MKLTQRLSLRVR) lie on the Cytoplasmic side of the membrane. Residues 13–33 (LTLIFLILVSITWAISSFVAW) form a helical membrane-spanning segment. The Periplasmic segment spans residues 34 to 161 (RKTTDNVDEL…REDMALAIVA (128 aa)). Residues 162–182 (AQLTPWLIALPFMLLILLLLL) traverse the membrane as a helical segment. The region spanning 183 to 235 (HRELRPLKKLAQALRFRSPESETPLDAKGVPSEVRPLVEALNQLFSRIHSMMV) is the HAMP domain. Residues 183–449 (HRELRPLKKL…EGGFEAVVRW (267 aa)) lie on the Cytoplasmic side of the membrane. One can recognise a Histidine kinase domain in the interval 243-449 (DAAHELRSPL…EGGFEAVVRW (207 aa)). Residue H246 is modified to Phosphohistidine; by autocatalysis.

Its subcellular location is the cell inner membrane. The enzyme catalyses ATP + protein L-histidine = ADP + protein N-phospho-L-histidine.. Its function is as follows. Member of a two-component regulatory system QseB/QseC. Activates the flagella regulon by activating transcription of FlhDC. May activate QseB by phosphorylation. The polypeptide is Sensor protein QseC (qseC) (Salmonella typhi).